A 271-amino-acid polypeptide reads, in one-letter code: Aminoglycoside 3'-phosphotransferase (271 aa).

Asp198 functions as the Proton acceptor in the catalytic mechanism.

This sequence belongs to the aminoglycoside phosphotransferase family.

It carries out the reaction kanamycin A + ATP = kanamycin 3'-phosphate + ADP + H(+). Resistance to kanamycin and structurally-related aminoglycosides, including amikacin. The protein is Aminoglycoside 3'-phosphotransferase (aphA1) of Escherichia coli.